Consider the following 340-residue polypeptide: Phosphate acyltransferase (340 aa).

The protein belongs to the PlsX family. Homodimer. Probably interacts with PlsY.

The protein localises to the cytoplasm. The enzyme catalyses a fatty acyl-[ACP] + phosphate = an acyl phosphate + holo-[ACP]. It functions in the pathway lipid metabolism; phospholipid metabolism. Catalyzes the reversible formation of acyl-phosphate (acyl-PO(4)) from acyl-[acyl-carrier-protein] (acyl-ACP). This enzyme utilizes acyl-ACP as fatty acyl donor, but not acyl-CoA. The protein is Phosphate acyltransferase of Clostridioides difficile (strain 630) (Peptoclostridium difficile).